The following is a 101-amino-acid chain: NAD(P)H-quinone oxidoreductase subunit 4L, chloroplastic (101 aa).

Transmembrane regions (helical) follow at residues 2–22 (ILEH…YGLI), 32–52 (MCLE…SDFF), and 61–81 (IFSI…LAIV).

Belongs to the complex I subunit 4L family. In terms of assembly, NDH is composed of at least 16 different subunits, 5 of which are encoded in the nucleus.

It is found in the plastid. It localises to the chloroplast thylakoid membrane. It catalyses the reaction a plastoquinone + NADH + (n+1) H(+)(in) = a plastoquinol + NAD(+) + n H(+)(out). It carries out the reaction a plastoquinone + NADPH + (n+1) H(+)(in) = a plastoquinol + NADP(+) + n H(+)(out). Its function is as follows. NDH shuttles electrons from NAD(P)H:plastoquinone, via FMN and iron-sulfur (Fe-S) centers, to quinones in the photosynthetic chain and possibly in a chloroplast respiratory chain. The immediate electron acceptor for the enzyme in this species is believed to be plastoquinone. Couples the redox reaction to proton translocation, and thus conserves the redox energy in a proton gradient. The sequence is that of NAD(P)H-quinone oxidoreductase subunit 4L, chloroplastic from Nicotiana sylvestris (Wood tobacco).